A 250-amino-acid polypeptide reads, in one-letter code: Phosphoribosylaminoimidazole-succinocarboxamide synthase (250 aa).

It belongs to the SAICAR synthetase family.

It catalyses the reaction 5-amino-1-(5-phospho-D-ribosyl)imidazole-4-carboxylate + L-aspartate + ATP = (2S)-2-[5-amino-1-(5-phospho-beta-D-ribosyl)imidazole-4-carboxamido]succinate + ADP + phosphate + 2 H(+). The protein operates within purine metabolism; IMP biosynthesis via de novo pathway; 5-amino-1-(5-phospho-D-ribosyl)imidazole-4-carboxamide from 5-amino-1-(5-phospho-D-ribosyl)imidazole-4-carboxylate: step 1/2. The chain is Phosphoribosylaminoimidazole-succinocarboxamide synthase from Parasynechococcus marenigrum (strain WH8102).